We begin with the raw amino-acid sequence, 872 residues long: Alanine--tRNA ligase (872 aa).

Histidine 567, histidine 571, cysteine 669, and histidine 673 together coordinate Zn(2+).

This sequence belongs to the class-II aminoacyl-tRNA synthetase family. The cofactor is Zn(2+).

Its subcellular location is the cytoplasm. The catalysed reaction is tRNA(Ala) + L-alanine + ATP = L-alanyl-tRNA(Ala) + AMP + diphosphate. Its function is as follows. Catalyzes the attachment of alanine to tRNA(Ala) in a two-step reaction: alanine is first activated by ATP to form Ala-AMP and then transferred to the acceptor end of tRNA(Ala). Also edits incorrectly charged Ser-tRNA(Ala) and Gly-tRNA(Ala) via its editing domain. The chain is Alanine--tRNA ligase from Streptococcus pyogenes serotype M18 (strain MGAS8232).